Consider the following 174-residue polypeptide: Chorismate pyruvate-lyase (174 aa).

Substrate is bound by residues M36, R78, L116, and E157.

Belongs to the UbiC family. Monomer.

It is found in the cytoplasm. It catalyses the reaction chorismate = 4-hydroxybenzoate + pyruvate. It participates in cofactor biosynthesis; ubiquinone biosynthesis. In terms of biological role, removes the pyruvyl group from chorismate, with concomitant aromatization of the ring, to provide 4-hydroxybenzoate (4HB) for the ubiquinone pathway. In Serratia proteamaculans (strain 568), this protein is Chorismate pyruvate-lyase.